Reading from the N-terminus, the 592-residue chain is Bifunctional purine biosynthesis protein ATIC (592 aa).

The residue at position 1 (Met1) is an N-acetylmethionine. An MGS-like domain is found at 2-146 (APGQLALFSV…KNHARVTVVC (145 aa)). Residues 2–198 (APGQLALFSV…ISDYFRKQYS (197 aa)) form an IMP cyclohydrolase region. IMP contacts are provided by residues 12 to 14 (SDK), 34 to 37 (SGGT), 64 to 67 (RVKT), 101 to 102 (CN), and 125 to 126 (DI). Lys137 acts as the Proton donor/acceptor; for FAICAR cyclization activity in catalysis. Residue Lys199 is modified to N6-acetyllysine. The AICAR formyltransferase stretch occupies residues 199–592 (KGVSQMPLRY…AHTNLRLFHH (394 aa)). 5-amino-1-(5-phospho-beta-D-ribosyl)imidazole-4-carboxamide-binding positions include 207–208 (RY), His267, Gly316, Asp339, Asn431, and Arg451. The active-site Proton acceptor; for AICAR formyltransferase activity is His267. Ile452 is a binding site for (6R)-10-formyltetrahydrofolate. Phe541 serves as a coordination point for 5-amino-1-(5-phospho-beta-D-ribosyl)imidazole-4-carboxamide. (6R)-10-formyltetrahydrofolate is bound by residues Asp546 and 565 to 566 (SA). Arg588 is a 5-amino-1-(5-phospho-beta-D-ribosyl)imidazole-4-carboxamide binding site.

It belongs to the PurH family. In terms of assembly, homodimer. Associates with internalized INSR complexes on Golgi/endosomal membranes. Interacts with INSR; ATIC together with PRKAA2/AMPK2 and HACD3/PTPLAD1 is proposed to be part of a signaling network regulating INSR autophosphorylation and endocytosis. Present in the heart, brain, placenta, lung, liver, skeletal muscle, kidney, pancreas.

It localises to the cytoplasm. Its subcellular location is the cytosol. It carries out the reaction (6R)-10-formyltetrahydrofolate + 5-amino-1-(5-phospho-beta-D-ribosyl)imidazole-4-carboxamide = 5-formamido-1-(5-phospho-D-ribosyl)imidazole-4-carboxamide + (6S)-5,6,7,8-tetrahydrofolate. It catalyses the reaction 10-formyldihydrofolate + 5-amino-1-(5-phospho-beta-D-ribosyl)imidazole-4-carboxamide = 5-formamido-1-(5-phospho-D-ribosyl)imidazole-4-carboxamide + 7,8-dihydrofolate. The enzyme catalyses IMP + H2O = 5-formamido-1-(5-phospho-D-ribosyl)imidazole-4-carboxamide. The catalysed reaction is 5-amino-1-(5-phospho-D-ribosyl)imidazole-4-thiocarboxamide + 10-formyldihydrofolate = 6-thio-IMP + 7,8-dihydrofolate + H2O. It participates in purine metabolism; IMP biosynthesis via de novo pathway; 5-formamido-1-(5-phospho-D-ribosyl)imidazole-4-carboxamide from 5-amino-1-(5-phospho-D-ribosyl)imidazole-4-carboxamide (10-formyl THF route): step 1/1. It functions in the pathway purine metabolism; IMP biosynthesis via de novo pathway; IMP from 5-formamido-1-(5-phospho-D-ribosyl)imidazole-4-carboxamide: step 1/1. AMP and XMP inhibit AICAR formyltransferase activity. AICAR formyltransferase activity is inhibited by N-(6-fluoro-1-oxo-1,2-dihydroisoquinolin-7-yl)-5- [(3R)-3-hydroxypyrrolidin-1-yl]thiophene-2-sulfonamide (LSN 3213128), which acts as a tumor suppression in cancer cell lines. In terms of biological role, bifunctional enzyme that catalyzes the last two steps of purine biosynthesis. Acts as a transformylase that incorporates a formyl group to the AMP analog AICAR (5-amino-1-(5-phospho-beta-D-ribosyl)imidazole-4-carboxamide) to produce the intermediate formyl-AICAR (FAICAR). Can use both 10-formyldihydrofolate and 10-formyltetrahydrofolate as the formyl donor in this reaction. Also catalyzes the cyclization of FAICAR to inosine monophosphate (IMP). Is able to convert thio-AICAR to 6-mercaptopurine ribonucleotide, an inhibitor of purine biosynthesis used in the treatment of human leukemias. Promotes insulin receptor/INSR autophosphorylation and is involved in INSR internalization. This chain is Bifunctional purine biosynthesis protein ATIC, found in Homo sapiens (Human).